The chain runs to 238 residues: Ubiquinone biosynthesis O-methyltransferase (238 aa).

S-adenosyl-L-methionine is bound by residues Arg40, Gly59, Asp81, and Met126.

The protein belongs to the methyltransferase superfamily. UbiG/COQ3 family.

It catalyses the reaction a 3-demethylubiquinol + S-adenosyl-L-methionine = a ubiquinol + S-adenosyl-L-homocysteine + H(+). The catalysed reaction is a 3-(all-trans-polyprenyl)benzene-1,2-diol + S-adenosyl-L-methionine = a 2-methoxy-6-(all-trans-polyprenyl)phenol + S-adenosyl-L-homocysteine + H(+). It participates in cofactor biosynthesis; ubiquinone biosynthesis. Its function is as follows. O-methyltransferase that catalyzes the 2 O-methylation steps in the ubiquinone biosynthetic pathway. The polypeptide is Ubiquinone biosynthesis O-methyltransferase (Neisseria meningitidis serogroup C (strain 053442)).